We begin with the raw amino-acid sequence, 138 residues long: Ig heavy chain V region TEPC 1017 (138 aa).

Residues 1 to 20 (MGWSYIILFLVATATDVHSQ) form the signal peptide. The tract at residues 21–49 (VQLQQPGAELVKPGASVQLSCKASGHTFT) is framework-1. Cysteine 41 and cysteine 115 form a disulfide bridge. Residues 50 to 54 (NYWIH) are complementarity-determining-1. Residues 55–68 (WVKQRPGQGLEWIG) are framework-2. Residues 69-85 (EINPNDGRSNYNEKFKN) form a complementarity-determining-2 region. A framework-3 region spans residues 86–117 (KATLTVDKSSSTAYMQLSSLTPEEFAVYYCAR). A complementarity-determining-3 region spans residues 118–127 (SDGYYDWFVY). A framework-4 region spans residues 128 to 138 (WGQGTLVTFSA).

This is Ig heavy chain V region TEPC 1017 from Mus musculus (Mouse).